The sequence spans 666 residues: Polyamine deacetylase HDAC10 (666 aa).

A histone deacetylase region spans residues 1 to 323 (MGTALVYHED…VCMMVQTLLG (323 aa)). Residue His135 is part of the active site.

It belongs to the histone deacetylase family. HD type 2 subfamily. In terms of assembly, interacts with HDAC3. Interacts with HDAC2 and NCOR2/SMRT. Interacts with HSPA8/HSC70. Interacts with MSH2. In terms of tissue distribution, widely expressed.

The protein resides in the cytoplasm. It is found in the nucleus. The catalysed reaction is N(8)-acetylspermidine + H2O = spermidine + acetate. It catalyses the reaction N-acetylputrescine + H2O = putrescine + acetate. It carries out the reaction N-acetylcadaverine + H2O = cadaverine + acetate. The enzyme catalyses N(6)-acetyl-L-lysyl-[protein] + H2O = L-lysyl-[protein] + acetate. Polyamine deacetylase (PDAC), which acts preferentially on N(8)-acetylspermidine, and also on acetylcadaverine and acetylputrescine. Exhibits attenuated catalytic activity toward N(1),N(8)-diacetylspermidine and very low activity, if any, toward N(1)-acetylspermidine. Histone deacetylase activity has been observed in vitro. Has also been shown to be involved in MSH2 deacetylation. The physiological relevance of protein/histone deacetylase activity is unclear and could be very weak. May play a role in the promotion of late stages of autophagy, possibly autophagosome-lysosome fusion and/or lysosomal exocytosis in neuroblastoma cells. May play a role in homologous recombination. May promote DNA mismatch repair. The chain is Polyamine deacetylase HDAC10 (Hdac10) from Mus musculus (Mouse).